The primary structure comprises 94 residues: Prepro-gonadotropin-releasing hormone-like protein (94 aa).

The first 21 residues, 1-21, serve as a signal peptide directing secretion; it reads MNACILLTTLVTMITIEKVQG.

The protein localises to the secreted. In terms of biological role, neuropeptide involved in reproduction. May be an important hormone in the regulation of gonadal maturation. The protein is Prepro-gonadotropin-releasing hormone-like protein of Ruditapes philippinarum (Japanese carpet shell).